A 72-amino-acid chain; its full sequence is Large ribosomal subunit protein uL29 (72 aa).

Belongs to the universal ribosomal protein uL29 family.

This Microcystis aeruginosa (strain NIES-843 / IAM M-2473) protein is Large ribosomal subunit protein uL29.